The chain runs to 295 residues: Bifunctional protein FolD (295 aa).

Residues 165 to 167 (GRG), serine 192, and isoleucine 233 contribute to the NADP(+) site.

It belongs to the tetrahydrofolate dehydrogenase/cyclohydrolase family. Homodimer.

It carries out the reaction (6R)-5,10-methylene-5,6,7,8-tetrahydrofolate + NADP(+) = (6R)-5,10-methenyltetrahydrofolate + NADPH. The enzyme catalyses (6R)-5,10-methenyltetrahydrofolate + H2O = (6R)-10-formyltetrahydrofolate + H(+). Its pathway is one-carbon metabolism; tetrahydrofolate interconversion. In terms of biological role, catalyzes the oxidation of 5,10-methylenetetrahydrofolate to 5,10-methenyltetrahydrofolate and then the hydrolysis of 5,10-methenyltetrahydrofolate to 10-formyltetrahydrofolate. The sequence is that of Bifunctional protein FolD from Tropheryma whipplei (strain TW08/27) (Whipple's bacillus).